Reading from the N-terminus, the 533-residue chain is Peptide chain release factor 3 (533 aa).

In terms of domain architecture, tr-type G spans 9 to 284; sequence ARRRTFAIIS…ALCELSPPPL (276 aa). GTP is bound by residues 18 to 25, 95 to 99, and 149 to 152; these read SHPDAGKT, DTPGH, and NKLD.

It belongs to the TRAFAC class translation factor GTPase superfamily. Classic translation factor GTPase family. PrfC subfamily.

The protein localises to the cytoplasm. In terms of biological role, increases the formation of ribosomal termination complexes and stimulates activities of RF-1 and RF-2. It binds guanine nucleotides and has strong preference for UGA stop codons. It may interact directly with the ribosome. The stimulation of RF-1 and RF-2 is significantly reduced by GTP and GDP, but not by GMP. The polypeptide is Peptide chain release factor 3 (Cupriavidus necator (strain ATCC 17699 / DSM 428 / KCTC 22496 / NCIMB 10442 / H16 / Stanier 337) (Ralstonia eutropha)).